Consider the following 185-residue polypeptide: Ribosome-recycling factor (185 aa).

The protein belongs to the RRF family.

It is found in the cytoplasm. In terms of biological role, responsible for the release of ribosomes from messenger RNA at the termination of protein biosynthesis. May increase the efficiency of translation by recycling ribosomes from one round of translation to another. This is Ribosome-recycling factor from Beutenbergia cavernae (strain ATCC BAA-8 / DSM 12333 / CCUG 43141 / JCM 11478 / NBRC 16432 / NCIMB 13614 / HKI 0122).